We begin with the raw amino-acid sequence, 512 residues long: Extracellular serine/threonine protein kinase CeFam20 (512 aa).

Over 1-6 (MRCNIK) the chain is Cytoplasmic. Residues 7–26 (RLFTLAIGVFAATLVIISFS) form a helical; Signal-anchor for type II membrane protein membrane-spanning segment. Topologically, residues 27–512 (KDNYEREWKQ…QDKKDDKKTV (486 aa)) are lumenal. Cysteines 110 and 144 form a disulfide. Residue asparagine 113 is glycosylated (N-linked (GlcNAc...) asparagine). 3 residues coordinate ATP: glutamine 176, lysine 192, and glutamate 213. Glutamate 213 is a Mn(2+) binding site. N-linked (GlcNAc...) asparagine glycosylation is present at asparagine 242. 2 disulfide bridges follow: cysteine 268/cysteine 284 and cysteine 273/cysteine 277. Residue 295-298 (QVFL) participates in ATP binding. Cystine bridges form between cysteine 333–cysteine 409 and cysteine 410–cysteine 469. Aspartate 366 is an active-site residue. ATP-binding residues include glutamate 371 and aspartate 387. Aspartate 387 is a Mn(2+) binding site. The disordered stretch occupies residues 486–512 (PDVSDAEQNDEEQSEEHQDKKDDKKTV). Residues 489–499 (SDAEQNDEEQS) are compositionally biased toward acidic residues. A compositionally biased stretch (basic and acidic residues) spans 500-512 (EEHQDKKDDKKTV).

Belongs to the FAM20 family. It depends on Mn(2+) as a cofactor.

It is found in the golgi apparatus membrane. It localises to the secreted. The enzyme catalyses L-seryl-[protein] + ATP = O-phospho-L-seryl-[protein] + ADP + H(+). It carries out the reaction L-threonyl-[protein] + ATP = O-phospho-L-threonyl-[protein] + ADP + H(+). Golgi serine/threonine protein kinase that phosphorylates secretory pathway proteins within Ser-x-Glu/pSer motifs. The sequence is that of Extracellular serine/threonine protein kinase CeFam20 from Caenorhabditis elegans.